A 109-amino-acid polypeptide reads, in one-letter code: Nucleoid-associated protein VIBHAR_03086 (109 aa).

Disordered stretches follow at residues methionine 1 to methionine 21 and glutamine 88 to phenylalanine 109.

This sequence belongs to the YbaB/EbfC family. As to quaternary structure, homodimer.

It localises to the cytoplasm. The protein localises to the nucleoid. In terms of biological role, binds to DNA and alters its conformation. May be involved in regulation of gene expression, nucleoid organization and DNA protection. This chain is Nucleoid-associated protein VIBHAR_03086, found in Vibrio campbellii (strain ATCC BAA-1116).